A 172-amino-acid polypeptide reads, in one-letter code: 3-hydroxydecanoyl-[acyl-carrier-protein] dehydratase (172 aa).

The active site involves H71.

This sequence belongs to the thioester dehydratase family. FabA subfamily. Homodimer.

It localises to the cytoplasm. The enzyme catalyses a (3R)-hydroxyacyl-[ACP] = a (2E)-enoyl-[ACP] + H2O. It carries out the reaction (3R)-hydroxydecanoyl-[ACP] = (2E)-decenoyl-[ACP] + H2O. The catalysed reaction is (2E)-decenoyl-[ACP] = (3Z)-decenoyl-[ACP]. The protein operates within lipid metabolism; fatty acid biosynthesis. Its function is as follows. Necessary for the introduction of cis unsaturation into fatty acids. Catalyzes the dehydration of (3R)-3-hydroxydecanoyl-ACP to E-(2)-decenoyl-ACP and then its isomerization to Z-(3)-decenoyl-ACP. Can catalyze the dehydratase reaction for beta-hydroxyacyl-ACPs with saturated chain lengths up to 16:0, being most active on intermediate chain length. This Erwinia tasmaniensis (strain DSM 17950 / CFBP 7177 / CIP 109463 / NCPPB 4357 / Et1/99) protein is 3-hydroxydecanoyl-[acyl-carrier-protein] dehydratase.